A 255-amino-acid chain; its full sequence is Hemin import ATP-binding protein HmuV (255 aa).

In terms of domain architecture, ABC transporter spans leucine 2–glutamate 238. Residue glycine 34–serine 41 coordinates ATP.

Belongs to the ABC transporter superfamily. Heme (hemin) importer (TC 3.A.1.14.5) family. The complex is composed of two ATP-binding proteins (HmuV), two transmembrane proteins (HmuU) and a solute-binding protein (HmuT).

It localises to the cell inner membrane. Part of the ABC transporter complex HmuTUV involved in hemin import. Responsible for energy coupling to the transport system. This chain is Hemin import ATP-binding protein HmuV, found in Pseudomonas fluorescens (strain ATCC BAA-477 / NRRL B-23932 / Pf-5).